A 101-amino-acid polypeptide reads, in one-letter code: Small ribosomal subunit protein uS10 (101 aa).

It belongs to the universal ribosomal protein uS10 family. As to quaternary structure, part of the 30S ribosomal subunit.

Functionally, involved in the binding of tRNA to the ribosomes. The chain is Small ribosomal subunit protein uS10 from Corynebacterium aurimucosum (strain ATCC 700975 / DSM 44827 / CIP 107346 / CN-1) (Corynebacterium nigricans).